The primary structure comprises 123 residues: Small ribosomal subunit protein uS12c (123 aa).

The protein belongs to the universal ribosomal protein uS12 family. As to quaternary structure, part of the 30S ribosomal subunit.

The protein localises to the plastid. It is found in the chloroplast. With S4 and S5 plays an important role in translational accuracy. Located at the interface of the 30S and 50S subunits. This Chaetosphaeridium globosum (Charophycean green alga) protein is Small ribosomal subunit protein uS12c (rps12).